The following is a 271-amino-acid chain: Oxamate carbamoyltransferase subunit AllH (271 aa).

The protein belongs to the AllH family. In terms of assembly, the OXTCase is composed of 3 subunits, AllF, AllG and AllH. Requires Mg(2+) as cofactor.

The enzyme catalyses oxamate + carbamoyl phosphate = N-carbamoyl-2-oxoglycine + phosphate. The protein operates within nitrogen metabolism; (S)-allantoin degradation. In terms of biological role, component of a carbamoyltransferase involved in the anaerobic nitrogen utilization via the assimilation of allantoin. Catalyzes the conversion of oxalurate (N-carbamoyl-2-oxoglycine) to oxamate and carbamoyl phosphate. In Escherichia coli O157:H7, this protein is Oxamate carbamoyltransferase subunit AllH.